Consider the following 479-residue polypeptide: U6 small nuclear RNA (adenine-(43)-N(6))-methyltransferase (479 aa).

5 residues coordinate S-adenosyl-L-methionine: K82, G108, D131, T164, and N184. The involved in dlc-1 binding stretch occupies residues D420–Q424.

This sequence belongs to the methyltransferase superfamily. METTL16/RlmF family. In terms of assembly, self-associates. Interacts with dlc-1; the interaction is direct, and is required for nuclear localization of mett-10. As to expression, expressed in the intestine, vulva, and cells of the somatic gonad including distal tip cells, gonadal sheath cells and spermatheca.

The protein localises to the nucleus. The enzyme catalyses an adenosine in mRNA + S-adenosyl-L-methionine = an N(6)-methyladenosine in mRNA + S-adenosyl-L-homocysteine + H(+). It catalyses the reaction adenosine in U6 snRNA + S-adenosyl-L-methionine = N(6)-methyladenosine in U6 snRNA + S-adenosyl-L-homocysteine + H(+). In terms of biological role, RNA N6-methyltransferase that methylates adenosine residues at the N(6) position of a subset of RNAs and is involved in S-adenosyl-L-methionine homeostasis by regulating splicing of S-adenosylmethionine synthase transcripts (sams-3, sams-4 and sams-5). Able to N6-methylate a subset of mRNAs containing the 5'UACAGAAAC-3' nonamer sequence. Plays a key role in S-adenosyl-L-methionine homeostasis: under rich-diet conditions, catalyzes N6-methylation of S-adenosylmethionine synthase mRNAs (sams-3, sams-4 and sams-5), directly inhibiting splicing and protein production of S-adenosylmethionine synthase. In addition to mRNAs, also able to mediate N6-methylation of U6 small nuclear RNA (U6 snRNA). Required for gamete production, inhibiting germ cell proliferative fate and ensuring germ cell meiotic development. Also promotes progression of the mitotic cell cycle in those germ cells that continue to proliferate. Plays a role in the development of the vulva, somatic gonad and embryo. In Caenorhabditis elegans, this protein is U6 small nuclear RNA (adenine-(43)-N(6))-methyltransferase.